The chain runs to 88 residues: Apolipoprotein C-I (88 aa).

The first 26 residues, 1–26 (MRLLLSLPVLLVALSVVLERPAPAQA), serve as a signal peptide directing secretion.

It belongs to the apolipoprotein C1 family.

The protein resides in the secreted. In terms of biological role, inhibitor of lipoprotein binding to the low density lipoprotein (LDL) receptor, LDL receptor-related protein, and very low density lipoprotein (VLDL) receptor. Associates with high density lipoproteins (HDL) and the triacylglycerol-rich lipoproteins in the plasma and makes up about 10% of the protein of the VLDL and 2% of that of HDL. Appears to interfere directly with fatty acid uptake and is also the major plasma inhibitor of cholesteryl ester transfer protein (CETP). Binds free fatty acids and reduces their intracellular esterification. Modulates the interaction of APOE with beta-migrating VLDL and inhibits binding of beta-VLDL to the LDL receptor-related protein. The polypeptide is Apolipoprotein C-I (APOC1) (Tupaia glis (Common tree shrew)).